The chain runs to 601 residues: Probable sphingosine-1-phosphate lyase (601 aa).

Position 360 is an N6-(pyridoxal phosphate)lysine (K360).

This sequence belongs to the group II decarboxylase family. Sphingosine-1-phosphate lyase subfamily. Pyridoxal 5'-phosphate is required as a cofactor.

The enzyme catalyses sphinganine 1-phosphate = hexadecanal + phosphoethanolamine. Functionally, cleaves phosphorylated sphingoid bases (PSBs), such as sphingosine-1-phosphate, into fatty aldehydes and phosphoethanolamine. Possibly implicated in influencing the macrophage autophagy pathway. In Legionella pneumophila subsp. pneumophila (strain Philadelphia 1 / ATCC 33152 / DSM 7513), this protein is Probable sphingosine-1-phosphate lyase.